Consider the following 91-residue polypeptide: Acylphosphatase (91 aa).

One can recognise an Acylphosphatase-like domain in the interval 4 to 91 (RYLIKVLGRV…DNEKSFKIVY (88 aa)). Active-site residues include arginine 19 and asparagine 37.

Belongs to the acylphosphatase family.

It catalyses the reaction an acyl phosphate + H2O = a carboxylate + phosphate + H(+). In Clostridium acetobutylicum (strain ATCC 824 / DSM 792 / JCM 1419 / IAM 19013 / LMG 5710 / NBRC 13948 / NRRL B-527 / VKM B-1787 / 2291 / W), this protein is Acylphosphatase (acyP).